The chain runs to 746 residues: Dystrobrevin alpha (746 aa).

Residues 1 to 288 are interaction with MAGEE1; the sequence is MIEDSGKRGN…SHSNQHQMKE (288 aa). The segment at 238-294 adopts a ZZ-type zinc-finger fold; it reads FHPVECSYCHSESMMGFRYRCQQCHNYQLCQDCFWRGHAGGSHSNQHQMKEYTSWKS. Cys243, Cys246, Cys258, Cys261, Cys267, Cys270, His280, and His284 together coordinate Zn(2+). The segment at 397-447 is syntrophin-binding region; that stretch reads DRLADEHVLIGLYVNMLRNDPPCMLESSNRLDEEHRLIARYAARLAAESSS. Residues 458-557 adopt a coiled-coil conformation; the sequence is DISFTIDANK…KLLKEEELKQ (100 aa). Disordered stretches follow at residues 555-577, 646-667, and 684-721; these read LKQGTQGASSPRSSPSHTISRPI, ETESTVDSEFSRPQFEDLAPSP, and YIHGGAASTTHGDMVPEDGDPYTQPEDGNYENESVRQL. The span at 563-576 shows a compositional bias: low complexity; it reads SSPRSSPSHTISRP. A Phosphoserine modification is found at Ser666.

It belongs to the dystrophin family. Dystrobrevin subfamily. In terms of assembly, interacts with dystrophin, utrophin and the syntrophins SNTA1, SNTB1, SNTB2, SNTG1 and SNTG2. Binds dystrobrevin binding protein 1. Interacts with MAGEE1. Interacts with Ctnnal1. The interaction is required for correct localization of both Ctnnal1 and Dtna. Does not interact with utrophin. As to quaternary structure, does not interact with syntrophin. Phosphorylation of isoform 2 on tyrosine kinase substrate domain present in the C-terminus. In terms of tissue distribution, expressed in skeletal muscle, heart, lung and brain. Sarcolemma and neuromuscular junction in skeletal muscle. Isoform 2 is restricted to the neuromuscular junction. Isoforms 5 and 6 are only expressed in muscle.

The protein localises to the cytoplasm. It localises to the synapse. Its subcellular location is the cell membrane. Functionally, involved in synapse maturation and required for normal muscle function. The protein is Dystrobrevin alpha (Dtna) of Mus musculus (Mouse).